The sequence spans 191 residues: Signal peptidase IB (191 aa).

At 1 to 7 (MKKELLE) the chain is on the cytoplasmic side. A helical transmembrane segment spans residues 8–28 (WIISIAVAFVILFIVGKFIVT). Over 29–191 (PYTIKGESMD…HNFNPENTKN (163 aa)) the chain is Extracellular. Catalysis depends on residues S36 and K77.

It belongs to the peptidase S26 family.

It is found in the cell membrane. The enzyme catalyses Cleavage of hydrophobic, N-terminal signal or leader sequences from secreted and periplasmic proteins.. In terms of biological role, essential for cell viability. The sequence is that of Signal peptidase IB (spsB) from Staphylococcus aureus (strain Mu50 / ATCC 700699).